Consider the following 3326-residue polypeptide: Deoxyribonuclease CdiA (3326 aa).

Positions 36–342 (TADGVLTSGG…ARGALTLTGS (307 aa)) are two-partner system transport domain (TPS). The FHA-1 stretch occupies residues 343-1396 (YAGAGSLYSD…ITVRTGTLTN (1054 aa)). The receptor binding domain (RBD) stretch occupies residues 1397-1765 (QREGLVVTES…QQLGSPSLTD (369 aa)). Positions 1766-1951 (YPLPTSQSGL…LAQADKTNLQ (186 aa)) are YP domain. Positions 1959–2097 (SVSLSAGGDI…AGGPLQLAAG (139 aa)) are periplasmic FHA-1 repeat (pFR). The FHA-2 stretch occupies residues 2125–2660 (QGLVQSTVAS…SNRYDSKQTS (536 aa)). Positions 3060–3063 (VENN) match the VENN CT cleavage motif motif. The segment at 3060–3326 (VENNSLGDIA…DRNRQIGVIK (267 aa)) is CT domain.

The protein in the N-terminal section; belongs to the CdiA toxin family. In terms of assembly, the C-terminal (CT) domain interacts with cognate CdiI but not non-cognate CdiI from E.coli strain 536 / UPEC.

It localises to the target cell. The protein localises to the target cell cytoplasm. Toxic component of a toxin-immunity protein module, which functions as a cellular contact-dependent growth inhibition (CDI) system. CDI modules allow bacteria to communicate with and inhibit the growth of closely related neighboring bacteria in a contact-dependent fashion. CDI is neutralized by its cognate immunity protein CdiI, but not by non-cognate CdiI from other bacteria. The C-terminal domain (CT) has strong DNase activity; this activity is inhibited by cognate CdiI. In terms of biological role, the CdiA protein is thought to be exported from the cell through the central lumen of CdiB, the other half of its two-partner system (TPS). The TPS domain probably remains associated with CdiB while the FHA-1 domain forms an extended filament with the receptor-binding domain (RBD) at its extremity; in the secretion arrested state the C-terminus of the RBD and YP domains form a hairpin-like structure as the FHA-2, PT and CT domains are periplasmic. The YP domain is probably responsible for this arrest at the point where it re-enters the host cell periplasm. Upon binding to a target cell outer membrane receptor a signal is transmitted to activate secretion. The filament elongates slightly, the rest of CdiA is secreted and the FHA-2 domain becomes stably associated with the target cell's outer membrane where it facilitates entry of the toxic CT domain into the target cell periplasm. From there the toxic CT domain is cleaved and gains access to the target cell cytoplasm via an inner membrane protein. The chain is Deoxyribonuclease CdiA from Dickeya dadantii (strain 3937) (Erwinia chrysanthemi (strain 3937)).